The sequence spans 1058 residues: Structural maintenance of chromosomes protein 6A (1058 aa).

Residues 23–1049 (ILRIRLENFM…SMVKSHEKIK (1027 aa)) enclose the Zinc-hook domain. 50-57 (GQNGSGKS) lines the ATP pocket. The stretch at 136–449 (KISSRKEELR…NDLKKHQTNK (314 aa)) forms a coiled coil. Residues 450 to 633 (VTAFGGDKVI…PPRPRRPTRL (184 aa)) are flexible hinge. A coiled-coil region spans residues 634–927 (CASFDDQIKD…RNKDLLKREL (294 aa)).

The protein belongs to the SMC family. SMC6 subfamily. In terms of assembly, forms a heterodimer with SMC5. The SMC5-SMC6 complex is composed of the SMC5 and SMC6 heterodimer attached via their hinge domain and from the non-SMC subunit NSE4A or NSE4B. As to expression, expressed in seedlings, rosette leaves and floral buds.

The protein resides in the nucleus. It is found in the chromosome. Functionally, core component of the SMC5-SMC6 complex that promotes sister chromatid alignment after DNA damage and facilitates double-stranded DNA breaks (DSBs) repair via homologous recombination between sister chromatids. In Arabidopsis thaliana (Mouse-ear cress), this protein is Structural maintenance of chromosomes protein 6A (SMC6A).